The sequence spans 500 residues: Glutamate--tRNA ligase (500 aa).

The short motif at 12–22 (PSPTGHLHIGN) is the 'HIGH' region element. Residues 259-263 (KLSKR) carry the 'KMSKS' region motif. Residue Lys262 participates in ATP binding.

Belongs to the class-I aminoacyl-tRNA synthetase family. Glutamate--tRNA ligase type 1 subfamily. Monomer.

The protein localises to the cytoplasm. The catalysed reaction is tRNA(Glu) + L-glutamate + ATP = L-glutamyl-tRNA(Glu) + AMP + diphosphate. In terms of biological role, catalyzes the attachment of glutamate to tRNA(Glu) in a two-step reaction: glutamate is first activated by ATP to form Glu-AMP and then transferred to the acceptor end of tRNA(Glu). The sequence is that of Glutamate--tRNA ligase from Lactobacillus delbrueckii subsp. bulgaricus (strain ATCC 11842 / DSM 20081 / BCRC 10696 / JCM 1002 / NBRC 13953 / NCIMB 11778 / NCTC 12712 / WDCM 00102 / Lb 14).